The chain runs to 366 residues: Leucine-rich repeat-containing protein 58 (366 aa).

Residue serine 19 is modified to Phosphoserine. LRR repeat units follow at residues 40–61, 64–86, 87–108, 116–138, 139–161, 162–184, 185–206, 208–229, and 231–251; these read ALLR…LGGG, HLQL…LTLS, GLRT…PKGL, SLQV…LELR, ALQT…ENLR, SLEC…ANLP, SLNY…LSQL, SLRS…ILNL, and HLEE…RDLT. Low complexity predominate over residues 337–346; sequence ASHSSTSQSE. A disordered region spans residues 337–356; sequence ASHSSTSQSESDSEDEASVA.

This Mus musculus (Mouse) protein is Leucine-rich repeat-containing protein 58 (Lrrc58).